Consider the following 337-residue polypeptide: uncharacterized protein (337 aa).

A compositionally biased stretch (low complexity) spans 42–66 (SHSVSPSPSPSDFSSSSSSSSSSPS). The disordered stretch occupies residues 42 to 68 (SHSVSPSPSPSDFSSSSSSSSSSPSTF). The 176-residue stretch at 129 to 304 (FLVIDLEGKV…DDTKNITRVV (176 aa)) folds into the Exonuclease domain. Mg(2+) contacts are provided by D133, E135, and D234. E135 (proton acceptor) is an active-site residue. E135 contacts AMP. Catalysis depends on H291, which acts as the Proton acceptor. H291 lines the AMP pocket. Mg(2+) is bound at residue D296.

This is an uncharacterized protein from Arabidopsis thaliana (Mouse-ear cress).